The following is a 216-amino-acid chain: Uracil phosphoribosyltransferase (216 aa).

K30–R34 serves as a coordination point for GTP. Residues R80, R105, and D140–T148 each bind 5-phospho-alpha-D-ribose 1-diphosphate. Uracil contacts are provided by residues I203 and G208 to A210. D209 lines the 5-phospho-alpha-D-ribose 1-diphosphate pocket.

Belongs to the UPRTase family. Requires Mg(2+) as cofactor.

It catalyses the reaction UMP + diphosphate = 5-phospho-alpha-D-ribose 1-diphosphate + uracil. It functions in the pathway pyrimidine metabolism; UMP biosynthesis via salvage pathway; UMP from uracil: step 1/1. Its activity is regulated as follows. Allosterically activated by GTP. Functionally, catalyzes the conversion of uracil and 5-phospho-alpha-D-ribose 1-diphosphate (PRPP) to UMP and diphosphate. The polypeptide is Uracil phosphoribosyltransferase (Saccharolobus islandicus (strain Y.N.15.51 / Yellowstone #2) (Sulfolobus islandicus)).